Here is a 728-residue protein sequence, read N- to C-terminus: Phosphoribosylformylglycinamidine synthase subunit PurL (728 aa).

Histidine 42 is a catalytic residue. Positions 45 and 84 each coordinate ATP. Glutamate 86 contacts Mg(2+). Residues 87–90 and arginine 109 contribute to the substrate site; that span reads SHNH. Histidine 88 serves as the catalytic Proton acceptor. Aspartate 110 serves as a coordination point for Mg(2+). A substrate-binding site is contributed by glutamine 237. Aspartate 265 contacts Mg(2+). 309 to 311 contributes to the substrate binding site; sequence ESQ. ATP-binding residues include aspartate 491 and glycine 528. Asparagine 529 contacts Mg(2+). Position 531 (serine 531) interacts with substrate.

This sequence belongs to the FGAMS family. Monomer. Part of the FGAM synthase complex composed of 1 PurL, 1 PurQ and 2 PurS subunits.

It localises to the cytoplasm. The catalysed reaction is N(2)-formyl-N(1)-(5-phospho-beta-D-ribosyl)glycinamide + L-glutamine + ATP + H2O = 2-formamido-N(1)-(5-O-phospho-beta-D-ribosyl)acetamidine + L-glutamate + ADP + phosphate + H(+). The protein operates within purine metabolism; IMP biosynthesis via de novo pathway; 5-amino-1-(5-phospho-D-ribosyl)imidazole from N(2)-formyl-N(1)-(5-phospho-D-ribosyl)glycinamide: step 1/2. In terms of biological role, part of the phosphoribosylformylglycinamidine synthase complex involved in the purines biosynthetic pathway. Catalyzes the ATP-dependent conversion of formylglycinamide ribonucleotide (FGAR) and glutamine to yield formylglycinamidine ribonucleotide (FGAM) and glutamate. The FGAM synthase complex is composed of three subunits. PurQ produces an ammonia molecule by converting glutamine to glutamate. PurL transfers the ammonia molecule to FGAR to form FGAM in an ATP-dependent manner. PurS interacts with PurQ and PurL and is thought to assist in the transfer of the ammonia molecule from PurQ to PurL. The protein is Phosphoribosylformylglycinamidine synthase subunit PurL of Campylobacter jejuni subsp. jejuni serotype O:6 (strain 81116 / NCTC 11828).